An 836-amino-acid chain; its full sequence is uncharacterized protein (836 aa).

3 disordered regions span residues 1–25, 692–718, and 789–836; these read MDST…NEEE, DSRS…NNQR, and ESSG…GYAS. 2 stretches are compositionally biased toward polar residues: residues 789-799 and 825-836; these read ESSGINVSNTR and IDSSSAQNGYAS.

It is found in the nucleus. This is an uncharacterized protein from Schizosaccharomyces pombe (strain 972 / ATCC 24843) (Fission yeast).